Consider the following 183-residue polypeptide: MVSTTTFLMLTSIATLTSARSHLTVTIGSNCTLKGPQGGHVFWWRIYDNGWFTKPCDQPGRFFCNGRDLTIINVTANDKGFYYGTDYKSSLDYNIIVLPSTTPAPRKTTFSSSSAANNTISNPTFTALLKRTVNNSTTISTSTISIIAVVTIGISILVFTITYYTCCYKKDEHKGDPLLRFDI.

5 N-linked (GlcNAc...) asparagine; by host glycosylation sites follow: Asn-30, Asn-73, Asn-117, Asn-134, and Asn-135.

It belongs to the adenoviridae E3_20 family.

The polypeptide is Early E3 20.2 kDa glycoprotein (Homo sapiens (Human)).